The primary structure comprises 393 residues: Formate-dependent phosphoribosylglycinamide formyltransferase (393 aa).

N(1)-(5-phospho-beta-D-ribosyl)glycinamide is bound by residues 22–23 (EL) and Glu-82. Residues Arg-114, Lys-155, 160-165 (SSGKGQ), 195-198 (EGFI), and Glu-203 each bind ATP. An ATP-grasp domain is found at 119-308 (RLAAEELKLP…QFALHARAIL (190 aa)). Glu-267 and Glu-279 together coordinate Mg(2+). N(1)-(5-phospho-beta-D-ribosyl)glycinamide contacts are provided by residues Asp-286, Lys-356, and 363-364 (RR).

It belongs to the PurK/PurT family. As to quaternary structure, homodimer.

It carries out the reaction N(1)-(5-phospho-beta-D-ribosyl)glycinamide + formate + ATP = N(2)-formyl-N(1)-(5-phospho-beta-D-ribosyl)glycinamide + ADP + phosphate + H(+). Its pathway is purine metabolism; IMP biosynthesis via de novo pathway; N(2)-formyl-N(1)-(5-phospho-D-ribosyl)glycinamide from N(1)-(5-phospho-D-ribosyl)glycinamide (formate route): step 1/1. Involved in the de novo purine biosynthesis. Catalyzes the transfer of formate to 5-phospho-ribosyl-glycinamide (GAR), producing 5-phospho-ribosyl-N-formylglycinamide (FGAR). Formate is provided by PurU via hydrolysis of 10-formyl-tetrahydrofolate. The chain is Formate-dependent phosphoribosylglycinamide formyltransferase from Pseudomonas syringae pv. syringae (strain B728a).